A 307-amino-acid chain; its full sequence is Acetyl-coenzyme A carboxylase carboxyl transferase subunit beta (307 aa).

The 270-residue stretch at Leu-28–Pro-297 folds into the CoA carboxyltransferase N-terminal domain. The disordered stretch occupies residues Arg-286–Ala-307. Over residues Gly-292 to Ala-307 the composition is skewed to pro residues.

The protein belongs to the AccD/PCCB family. Acetyl-CoA carboxylase is a heterohexamer composed of biotin carboxyl carrier protein (AccB), biotin carboxylase (AccC) and two subunits each of ACCase subunit alpha (AccA) and ACCase subunit beta (AccD).

The protein resides in the cytoplasm. It catalyses the reaction N(6)-carboxybiotinyl-L-lysyl-[protein] + acetyl-CoA = N(6)-biotinyl-L-lysyl-[protein] + malonyl-CoA. It participates in lipid metabolism; malonyl-CoA biosynthesis; malonyl-CoA from acetyl-CoA: step 1/1. In terms of biological role, component of the acetyl coenzyme A carboxylase (ACC) complex. Biotin carboxylase (BC) catalyzes the carboxylation of biotin on its carrier protein (BCCP) and then the CO(2) group is transferred by the transcarboxylase to acetyl-CoA to form malonyl-CoA. The polypeptide is Acetyl-coenzyme A carboxylase carboxyl transferase subunit beta (Methylorubrum extorquens (strain ATCC 14718 / DSM 1338 / JCM 2805 / NCIMB 9133 / AM1) (Methylobacterium extorquens)).